The primary structure comprises 142 residues: Transcription antitermination protein NusB (142 aa).

Belongs to the NusB family.

In terms of biological role, involved in transcription antitermination. Required for transcription of ribosomal RNA (rRNA) genes. Binds specifically to the boxA antiterminator sequence of the ribosomal RNA (rrn) operons. The protein is Transcription antitermination protein NusB of Thermotoga petrophila (strain ATCC BAA-488 / DSM 13995 / JCM 10881 / RKU-1).